A 1242-amino-acid chain; its full sequence is MEPLRPQITYGPIETVDNEELTEADMLSFISAAVNSTGLIGYNIKSFDDLMDNGIPQIVKQMFNVDITYKDQRDHTEIDKLRESVQIQFNFTDVNIERPQHRNYSQGNKINLLPNKARLSGLSYSGPVKLAAEVILTAHYSNGRQEVKRASIPPFQVSTFPIMRGSNRCHTHDLSKTAKKEIGEDPNEPGGYFIARGGEWVVDLLENIRFNTLHIHYHTMQQGNNEIIRGEFISQPGGAFENSSQIIIRYMTTGAITIEINSTKFSKLRIPWYLIFRMFGMTGDDSIIEQVVFDLESNSPVNTFMIEILEKSIHVSDPIFQPVQHELNREKIIQFLSEKVSKFVSNPSAYKSDENAVQYLNERQLTILDKILLPHMGQTADTRVRKLRFLGLLIHKILLVIMNVFPPTDRDSYRTKRVHGSGVSLAKAFKAIFNTSVIAPIINGFKELLKQTAFEELTQRNIIEAFSAALSKNTASDLNRSMEQSIISGNKTIMVRQRPIVNRVSTQSLERKNLLNTISALRTVNTHSTTNASKQTERADMMRRVHASYPGYICVAQSADTGEKVGMSKQLAITANVCTAGEVLSLKQRLLSDPAIQQLADVSNKDIVRKGLARVFINGEWIGCCTNAFELAQRYRMLRREGKIVHPHTTIYWDSMVDEVEFWLDVGRLTRPLLIVDNNIEKYNEACYKAAEARKKGNKDWEKHKISFVQNTRFTSQMAKAILAGTLTLEDLVAQGICEFITPEEAENCLVAFSITELRKHKHDVTRRFTHVDVPQSILGLAALVSPYANCTQPARVTYETNQGRQTGGWYCFSWPYRVDMNRFFQFYNEMPLVKTIAHNYVIPNGLNTIVAYMIYGGYNQEDSVIVSQSFIDRGGFAGTFYREEKVELESDIESFGKPDPLITKNLKPGANYEKLVDGFVPVGTVVKKGDIIIGKVAKIRGEKDELNKYIDRSVMYGFDEPAVVDAVMRPHGPNDEIFGLMRLRYERNLNIGDKMSSRSGNKGIAALALPTSDMPFTEDGLQPDLIVNPHSHPSRMTNGQMIETTVGLANALQGVVTDGTAFLPINVQLLSERLAQEGLRFNGCQKMFNGQTGEYFDAAIFIGPTYHQRLQKFVLDDRYAVASYGPTDALTGQPLDGKRSHGGLRLGEMEHWVLTAQGAMQTIIEKSHDDSDGCISYICRNCGEPAIYNASHPIYKCMNCDVQADISMVDSRRSSIVFQHEMRAANVNITSVLSPRVFQPA.

The segment at 1180–1201 (CRNCGEPAIYNASHPIYKCMNC) adopts a C4-type zinc-finger fold.

It belongs to the RNA polymerase beta chain family. As to quaternary structure, part of the viral DNA-directed RNA polymerase that consists of 8 polII-like subunits (RPB1, RPB2, RPB3, RPB5, RPB6, RPB7, RPB9, RPB10), a capping enzyme and a termination factor.

It localises to the host cytoplasm. It is found in the virion. It carries out the reaction RNA(n) + a ribonucleoside 5'-triphosphate = RNA(n+1) + diphosphate. Functionally, catalytic component of the DNA-directed RNA polymerase (RNAP) that catalyzes the transcription in the cytoplasm of viral DNA into RNA using the four ribonucleoside triphosphates as substrates. Forms the polymerase active center together with RPB1. Part of the core element with the central large cleft, the clamp element that moves to open and close the cleft and the jaws that are thought to grab the incoming DNA template. This is DNA-directed RNA polymerase RPB2 homolog from African swine fever virus (isolate Pig/Kenya/KEN-50/1950) (ASFV).